The following is a 477-amino-acid chain: Aspartyl/glutamyl-tRNA(Asn/Gln) amidotransferase subunit B (477 aa).

This sequence belongs to the GatB/GatE family. GatB subfamily. As to quaternary structure, heterotrimer of A, B and C subunits.

The catalysed reaction is L-glutamyl-tRNA(Gln) + L-glutamine + ATP + H2O = L-glutaminyl-tRNA(Gln) + L-glutamate + ADP + phosphate + H(+). It carries out the reaction L-aspartyl-tRNA(Asn) + L-glutamine + ATP + H2O = L-asparaginyl-tRNA(Asn) + L-glutamate + ADP + phosphate + 2 H(+). Allows the formation of correctly charged Asn-tRNA(Asn) or Gln-tRNA(Gln) through the transamidation of misacylated Asp-tRNA(Asn) or Glu-tRNA(Gln) in organisms which lack either or both of asparaginyl-tRNA or glutaminyl-tRNA synthetases. The reaction takes place in the presence of glutamine and ATP through an activated phospho-Asp-tRNA(Asn) or phospho-Glu-tRNA(Gln). The protein is Aspartyl/glutamyl-tRNA(Asn/Gln) amidotransferase subunit B of Legionella pneumophila (strain Corby).